A 371-amino-acid polypeptide reads, in one-letter code: tRNA-specific 2-thiouridylase MnmA (371 aa).

ATP contacts are provided by residues 24-31 and Leu50; that span reads AMSGGVDS. Cys119 acts as the Nucleophile in catalysis. An intrachain disulfide couples Cys119 to Cys215. Gly143 is a binding site for ATP. Positions 165–167 are interaction with tRNA; that stretch reads KDQ. Cys215 acts as the Cysteine persulfide intermediate in catalysis.

This sequence belongs to the MnmA/TRMU family.

It localises to the cytoplasm. The enzyme catalyses S-sulfanyl-L-cysteinyl-[protein] + uridine(34) in tRNA + AH2 + ATP = 2-thiouridine(34) in tRNA + L-cysteinyl-[protein] + A + AMP + diphosphate + H(+). Functionally, catalyzes the 2-thiolation of uridine at the wobble position (U34) of tRNA, leading to the formation of s(2)U34. The polypeptide is tRNA-specific 2-thiouridylase MnmA (Neorickettsia sennetsu (strain ATCC VR-367 / Miyayama) (Ehrlichia sennetsu)).